The primary structure comprises 268 residues: TATA-box-binding protein (268 aa).

The segment covering 1-24 has biased composition (polar residues); the sequence is MDSLTTHPATAQQARAFTSPSSLS. Positions 1–86 are disordered; sequence MDSLTTHPAT…TPAATPGASA (86 aa). Positions 50-86 are enriched in low complexity; it reads NGQSANGNVNGQQQGANAANGNGVMPATPAATPGASA. 2 tandem repeats follow at residues 95–171 and 185–262.

The protein belongs to the TBP family. Belongs to the TFIID complex together with the TBP-associated factors (TAFs). Binds DNA as monomer.

It is found in the nucleus. Functionally, general transcription factor that functions at the core of the DNA-binding multiprotein factor TFIID. Binding of TFIID to the TATA box is the initial transcriptional step of the pre-initiation complex (PIC), playing a role in the activation of eukaryotic genes transcribed by RNA polymerase II. This Emericella nidulans (strain FGSC A4 / ATCC 38163 / CBS 112.46 / NRRL 194 / M139) (Aspergillus nidulans) protein is TATA-box-binding protein (tbpA).